We begin with the raw amino-acid sequence, 201 residues long: Recombination protein RecR (201 aa).

The C4-type zinc-finger motif lies at Cys60 to Cys75. The Toprim domain maps to Ser83–Pro178.

The protein belongs to the RecR family.

May play a role in DNA repair. It seems to be involved in an RecBC-independent recombinational process of DNA repair. It may act with RecF and RecO. The protein is Recombination protein RecR of Methylocella silvestris (strain DSM 15510 / CIP 108128 / LMG 27833 / NCIMB 13906 / BL2).